An 80-amino-acid chain; its full sequence is Exodeoxyribonuclease 7 small subunit (80 aa).

The protein belongs to the XseB family. In terms of assembly, heterooligomer composed of large and small subunits.

It is found in the cytoplasm. The enzyme catalyses Exonucleolytic cleavage in either 5'- to 3'- or 3'- to 5'-direction to yield nucleoside 5'-phosphates.. In terms of biological role, bidirectionally degrades single-stranded DNA into large acid-insoluble oligonucleotides, which are then degraded further into small acid-soluble oligonucleotides. The polypeptide is Exodeoxyribonuclease 7 small subunit (Rickettsia felis (strain ATCC VR-1525 / URRWXCal2) (Rickettsia azadi)).